The chain runs to 88 residues: Small ribosomal subunit protein bS20 (88 aa).

Residues 1 to 28 form a disordered region; the sequence is MANTVQARKRARQAVKQNEHNSSLRSKL.

Belongs to the bacterial ribosomal protein bS20 family.

Its function is as follows. Binds directly to 16S ribosomal RNA. This Polynucleobacter necessarius subsp. necessarius (strain STIR1) protein is Small ribosomal subunit protein bS20.